The primary structure comprises 493 residues: Trans-aconitate decarboxylase 1 (493 aa).

The interval 1-22 (MAPALNANPTTKRDELSAPSAS) is disordered.

Belongs to the class-II fumarase/aspartase family.

The protein resides in the cytoplasm. It is found in the cytosol. Its subcellular location is the nucleus. It carries out the reaction trans-aconitate + H(+) = itaconate + CO2. Its pathway is secondary metabolite biosynthesis. In terms of biological role, trans-aconitate decarboxylase; part of the gene cluster that mediates the biosynthesis of itaconic acid and 2-hydroxyparaconate. Cis-aconitate is secreted by the mitochondrial tricarboxylate transporter MTT1. In the cytosol cis-aconitate is converted into trans-aconitate via isomerization by the aconitate-delta-isomerase ADI1. Decarboxylation of trans-aconitate by the trans-aconitate decarboxylase TAD1 then leads then to the production of itaconic acid. The cytochrome P450 monooxygenase CYP3 further converts itaconate to 2-hydroxyparaconate via oxidation of the double bond, leading to a transient epoxide, which can subsequently be lactonized to produce 2-hydroxyparaconate. Secretion of itaconate and possibly 2-hydroxyparaconate into the medium is mediated by the major facilitator ITP1. The glyoxalase domain-containing protein RDO1 is not involved in the biosynthesis of itaconate and 2-hydroxyparaconate, however, it might play a role in the further conversion of 2-hydroxyparaconate to itatartarate. This Mycosarcoma maydis (Corn smut fungus) protein is Trans-aconitate decarboxylase 1.